The chain runs to 297 residues: Farnesyl diphosphate synthase (297 aa).

The isopentenyl diphosphate site is built by Lys47, Arg50, and His79. Mg(2+) contacts are provided by Asp86 and Asp92. (2E)-geranyl diphosphate is bound at residue Arg97. Residue Arg98 coordinates isopentenyl diphosphate. Residues Lys183, Thr184, Gln221, and Lys238 each contribute to the (2E)-geranyl diphosphate site.

The protein belongs to the FPP/GGPP synthase family. It depends on Mg(2+) as a cofactor.

The protein resides in the cytoplasm. It catalyses the reaction isopentenyl diphosphate + (2E)-geranyl diphosphate = (2E,6E)-farnesyl diphosphate + diphosphate. The polypeptide is Farnesyl diphosphate synthase (Geobacillus stearothermophilus (Bacillus stearothermophilus)).